A 285-amino-acid chain; its full sequence is Dihydropteroate synthase (285 aa).

The 259-residue stretch at 18–276 folds into the Pterin-binding domain; sequence PKIMGIVNLT…DVKATADALK (259 aa). Asn-25 lines the Mg(2+) pocket. (7,8-dihydropterin-6-yl)methyl diphosphate is bound by residues Thr-66, Asp-99, Asn-119, Asp-190, Lys-229, and 264 to 266; that span reads RVH.

The protein belongs to the DHPS family. In terms of assembly, homodimer. Mg(2+) is required as a cofactor.

It carries out the reaction (7,8-dihydropterin-6-yl)methyl diphosphate + 4-aminobenzoate = 7,8-dihydropteroate + diphosphate. Its pathway is cofactor biosynthesis; tetrahydrofolate biosynthesis; 7,8-dihydrofolate from 2-amino-4-hydroxy-6-hydroxymethyl-7,8-dihydropteridine diphosphate and 4-aminobenzoate: step 1/2. Catalyzes the condensation of para-aminobenzoate (pABA) with 6-hydroxymethyl-7,8-dihydropterin diphosphate (DHPt-PP) to form 7,8-dihydropteroate (H2Pte), the immediate precursor of folate derivatives. In Neisseria meningitidis serogroup B (strain ATCC BAA-335 / MC58), this protein is Dihydropteroate synthase (folP).